We begin with the raw amino-acid sequence, 196 residues long: HTH-type transcriptional regulator BetI (196 aa).

The 61-residue stretch at 8 to 68 (PVRREQLIRA…AAMRQILREL (61 aa)) folds into the HTH tetR-type domain. The segment at residues 31–50 (TVATIAKKAGLSSGIVAHYF) is a DNA-binding region (H-T-H motif).

Its pathway is amine and polyamine biosynthesis; betaine biosynthesis via choline pathway [regulation]. Functionally, repressor involved in the biosynthesis of the osmoprotectant glycine betaine. It represses transcription of the choline transporter BetT and the genes of BetAB involved in the synthesis of glycine betaine. The chain is HTH-type transcriptional regulator BetI from Stenotrophomonas maltophilia (strain R551-3).